We begin with the raw amino-acid sequence, 371 residues long: Dead end protein homolog 1 (371 aa).

2 RRM domains span residues 85 to 163 (PQDI…ALDG) and 165 to 245 (PGNF…KLRS).

Its subcellular location is the nucleus. The protein localises to the cytoplasm. Functionally, RNA-binding factor that positively regulates gene expression by prohibiting miRNA-mediated gene suppression. Relieves miRNA repression in germline cells. Prohibits the function of several miRNAs by blocking the accessibility of target mRNAs. Sequence-specific RNA-binding factor that binds to U-rich regions (URRs) in the 3'untranslated region (3'-UTR) of several mRNAs. Does not bind to miRNAs. May play a role during early embryonic survival. The sequence is that of Dead end protein homolog 1 (dnd1) from Xenopus laevis (African clawed frog).